The chain runs to 461 residues: Nuclear distribution protein PAC1 (461 aa).

One can recognise a LisH domain in the interval Gln-9–Glu-41. Residues Thr-61 to Thr-88 adopt a coiled-coil conformation. 8 WD repeats span residues Ser-114–Lys-155, His-157–Arg-197, Gly-201–Thr-248, Gly-251–Lys-290, Gln-312–Leu-355, Gly-357–Lys-396, Ala-401–Val-446, and Ala-448–Asn-461.

Belongs to the WD repeat LIS1/nudF family. In terms of assembly, self-associates. Interacts with NDL1 and dynein.

It localises to the cytoplasm. The protein localises to the cytoskeleton. It is found in the spindle pole. Positively regulates the activity of the minus-end directed microtubule motor protein dynein. May enhance dynein-mediated microtubule sliding by targeting dynein to the microtubule plus end. Required for nuclear migration during vegetative growth as well as development. Required for retrograde early endosome (EE) transport from the hyphal tip. Required for localization of dynein to the mitotic spindle poles. Recruits additional proteins to the dynein complex at SPBs. In Arthroderma benhamiae (strain ATCC MYA-4681 / CBS 112371) (Trichophyton mentagrophytes), this protein is Nuclear distribution protein PAC1.